A 351-amino-acid polypeptide reads, in one-letter code: Bifunctional UDP-glucose 4-epimerase and UDP-xylose 4-epimerase 3 (351 aa).

8–39 (NILVTGGAGFIGTHTVVQLLNQGFKVTIIDNL) serves as a coordination point for NAD(+). Substrate is bound at residue serine 134. Residue tyrosine 158 is the Proton acceptor of the active site.

The protein belongs to the NAD(P)-dependent epimerase/dehydratase family. In terms of assembly, homodimer. Heterodimer. It depends on NAD(+) as a cofactor. Ubiquitous.

It carries out the reaction UDP-alpha-D-glucose = UDP-alpha-D-galactose. The catalysed reaction is UDP-beta-L-arabinopyranose = UDP-alpha-D-xylose. It functions in the pathway carbohydrate metabolism; galactose metabolism. The protein operates within nucleotide-sugar biosynthesis; UDP-L-arabinose biosynthesis; UDP-L-arabinose from UDP-alpha-D-xylose: step 1/1. Its pathway is cell wall biogenesis; cell wall polysaccharide biosynthesis. Strongly inhibited by UDP. Its function is as follows. Catalyzes the interconversion between UDP-glucose and UDP-galactose and the interconversion between UDP-arabinose and UDP-xylose. Cooperates with UGE2 in pollen development. May preferentially act in the UDP-galactose to UDP-glucose direction, therefore displaying a role in carbohydrate catabolism. This is Bifunctional UDP-glucose 4-epimerase and UDP-xylose 4-epimerase 3 (UGE3) from Arabidopsis thaliana (Mouse-ear cress).